Here is a 319-residue protein sequence, read N- to C-terminus: MAKLTVVIPYYQKEPGILRRALASVFAQTLEDFHVLVIDDESPYPIADELAGLAQEERERITVIRQPNGGPGGARNTGLDNVPADSDFVAFLDSDDVWTPDHLLNAYQSMTRFDADCYWASITGGDAFYYHFGVADLEKSETVTRLSESPLVVELPELQDVMLKNWSFLHMSCMVIGRKLFEKVRFEATLKLAAEDVLFFCDCVLASKRVVLCDAAGAVRGEGLNIFHSIDNDSPQFLKQQFNTWVALDTLEGRYRNRPKAMEAIRSYKHTARRQALWSQARRIKRRKLPQFDLLARWLWRDPRLIGSAAELAVGKLSR.

It belongs to the glycosyltransferase 2 family.

It localises to the cell membrane. The protein operates within glycan metabolism; exopolysaccharide biosynthesis. Its function is as follows. Glycosyltransferase required for the synthesis of succinoglycan (EPS I). Needed for the addition of the seventh sugar (glucose), catalyzes the formation of a beta-1,3 linkage between the seventh and eighth sugar. This chain is Succinoglycan biosynthesis protein ExoW (exoW), found in Rhizobium meliloti (strain 1021) (Ensifer meliloti).